The following is a 376-amino-acid chain: 26S proteasome non-ATPase regulatory subunit 13 (376 aa).

Positions 171–338 (SYYKDALRFL…KRVHMTWVQP (168 aa)) constitute a PCI domain.

It belongs to the proteasome subunit S11 family. In terms of assembly, component of the 19S proteasome regulatory particle complex. The 26S proteasome consists of a 20S core particle (CP) and two 19S regulatory subunits (RP). The regulatory particle is made of a lid composed of 9 subunits including PSMD13, a base containing 6 ATPases and few additional components.

Functionally, component of the 26S proteasome, a multiprotein complex involved in the ATP-dependent degradation of ubiquitinated proteins. This complex plays a key role in the maintenance of protein homeostasis by removing misfolded or damaged proteins, which could impair cellular functions, and by removing proteins whose functions are no longer required. Therefore, the proteasome participates in numerous cellular processes, including cell cycle progression, apoptosis, or DNA damage repair. In Bos taurus (Bovine), this protein is 26S proteasome non-ATPase regulatory subunit 13 (PSMD13).